Here is a 502-residue protein sequence, read N- to C-terminus: MEFSVKSGSPEKQRSACVVVGVFEPRRLSPVAEQLDKISDGYISSLLRRGDLEGKPGQMLLLHQVPGVLSERVLLVGCGKERELDERQYKQIINKTITTLNETGSMEAVCFLTELHVKGRDTYWKVRQAVETTKAGLYNFDQFKTNKAEPRRPLRKLVFNVPTRRELTIGEKAIAHGLAVAKGVRVCRDVANMPPNVCNPAYLASQARRLADSFDNITTKVIGEQEMAELGMNSYLAVARGSENEAMMAIIEYKGNADAKPIVLVGKGLTFDSGGISIKPAEGMDEMKYDMGGAASVLGTMHALAQLQLPINVIGVLAGCENMPGGNAYRPGDILTSMSGQTIEVLNTDAEGRLVLCDALTYVDRYDPETVIDVATLTGACIIALGHHTTGLLANHNPLAHELLNASEQAGDRAWRLPLFDEYQEQLESPFADMANIGGRPAGTITAAAFLSRFTKKYNWAHLDIAGTAWKSGKDKGSTGRPVPLLTQFLLNRAGVDIEEKE.

Mn(2+)-binding residues include Lys-267 and Asp-272. Lys-279 is an active-site residue. Mn(2+) contacts are provided by Asp-290, Asp-349, and Glu-351. Arg-353 is a catalytic residue.

This sequence belongs to the peptidase M17 family. Requires Mn(2+) as cofactor.

The protein resides in the cytoplasm. The enzyme catalyses Release of an N-terminal amino acid, Xaa-|-Yaa-, in which Xaa is preferably Leu, but may be other amino acids including Pro although not Arg or Lys, and Yaa may be Pro. Amino acid amides and methyl esters are also readily hydrolyzed, but rates on arylamides are exceedingly low.. It carries out the reaction Release of an N-terminal amino acid, preferentially leucine, but not glutamic or aspartic acids.. Its function is as follows. Presumably involved in the processing and regular turnover of intracellular proteins. Catalyzes the removal of unsubstituted N-terminal amino acids from various peptides. The polypeptide is Probable cytosol aminopeptidase (Aeromonas salmonicida (strain A449)).